The primary structure comprises 209 residues: Probable phosphatase C1687.21 (209 aa).

The active-site Tele-phosphohistidine intermediate is the His-8. Glu-82 (proton donor/acceptor) is an active-site residue.

The protein belongs to the phosphoglycerate mutase family. BPG-dependent PGAM subfamily.

It localises to the cytoplasm. The protein resides in the nucleus. The sequence is that of Probable phosphatase C1687.21 from Schizosaccharomyces pombe (strain 972 / ATCC 24843) (Fission yeast).